We begin with the raw amino-acid sequence, 190 residues long: LOB domain-containing protein 1 (190 aa).

A compositionally biased stretch (polar residues) spans 1-11; the sequence is MESKSDASVAT. The segment at 1-27 is disordered; it reads MESKSDASVATTPIISSSSSPPPSLSP. Positions 32-133 constitute an LOB domain; that stretch reads SPCAACKILR…AQLAKAQVEM (102 aa).

The protein belongs to the LOB domain-containing protein family. Expressed in young shoots, roots, stems, leaves and flowers.

In Arabidopsis thaliana (Mouse-ear cress), this protein is LOB domain-containing protein 1 (LBD1).